We begin with the raw amino-acid sequence, 148 residues long: Flavodoxin (148 aa).

One can recognise a Flavodoxin-like domain in the interval 4 to 145; sequence VLILFGSSTG…AVSAFAEDVL (142 aa).

This sequence belongs to the flavodoxin family. Requires FMN as cofactor.

Its function is as follows. Low-potential electron donor to a number of redox enzymes. The chain is Flavodoxin from Desulfovibrio desulfuricans (strain ATCC 27774 / DSM 6949 / MB).